We begin with the raw amino-acid sequence, 431 residues long: Homogentisate 1,2-dioxygenase (431 aa).

The active-site Proton acceptor is histidine 286. Residues histidine 329 and glutamate 335 each contribute to the Fe cation site. Positions 344 and 365 each coordinate homogentisate. Residue histidine 365 coordinates Fe cation.

The protein belongs to the homogentisate dioxygenase family. In terms of assembly, hexamer; dimer of trimers. Fe cation is required as a cofactor.

The catalysed reaction is homogentisate + O2 = 4-maleylacetoacetate + H(+). Its pathway is amino-acid degradation; L-phenylalanine degradation; acetoacetate and fumarate from L-phenylalanine: step 4/6. In terms of biological role, involved in the catabolism of homogentisate (2,5-dihydroxyphenylacetate or 2,5-OH-PhAc), a central intermediate in the degradation of phenylalanine and tyrosine. Catalyzes the oxidative ring cleavage of the aromatic ring of homogentisate to yield maleylacetoacetate. The sequence is that of Homogentisate 1,2-dioxygenase from Pseudomonas fluorescens (strain Pf0-1).